The following is a 204-amino-acid chain: Large ribosomal subunit protein uL4 (204 aa).

The disordered stretch occupies residues 53-73 (AFVSGGGKKPWRQKGRGGARA).

Belongs to the universal ribosomal protein uL4 family. In terms of assembly, part of the 50S ribosomal subunit.

In terms of biological role, one of the primary rRNA binding proteins, this protein initially binds near the 5'-end of the 23S rRNA. It is important during the early stages of 50S assembly. It makes multiple contacts with different domains of the 23S rRNA in the assembled 50S subunit and ribosome. Forms part of the polypeptide exit tunnel. In Campylobacter concisus (strain 13826), this protein is Large ribosomal subunit protein uL4.